The sequence spans 121 residues: Amelogenin (121 aa).

Residues 1–121 (LHHQIIPVLS…DLPLEPWPAS (121 aa)) are disordered. Polar residues-rich tracts occupy residues 10–19 (SQHQTPTHAL) and 47–59 (HSVTPTQHHQSNL). Positions 60–84 (PQPGQQPFQPQFPQKPTHRPIQPQA) are enriched in low complexity. The segment covering 85 to 121 (PVHPMPPMPQPQLPPMFPLQPLPPLLPDLPLEPWPAS) has biased composition (pro residues).

This sequence belongs to the amelogenin family.

Its subcellular location is the secreted. The protein resides in the extracellular space. It is found in the extracellular matrix. Its function is as follows. Plays a role in the biomineralization of teeth. Seems to regulate the formation of crystallites during the secretory stage of tooth enamel development. Thought to play a major role in the structural organization and mineralization of developing enamel. The protein is Amelogenin (AMEL) of Tachyglossus aculeatus aculeatus (Southeast Australian short-beaked echidna).